The sequence spans 1872 residues: Histone acetyltransferase KAT6B (1872 aa).

The 77-residue stretch at 1–77 folds into the SAMD1-like winged helix (WH) domain; sequence MVKLANPLYT…LASYKDPDNP (77 aa). Disordered stretches follow at residues 70–103 and 168–207; these read SYKD…CNDL and KEGP…HEKD. The 74-residue stretch at 104–177 folds into the H15 domain; the sequence is RNVDWNKLLK…KEGPQYRVNS (74 aa). The segment covering 189–202 has biased composition (low complexity); it reads PSAFPSSLPPVSLL. PHD-type zinc fingers lie at residues 214–273 and 270–321; these read IPIC…CKTC and CKTC…CRPK. The residue at position 356 (serine 356) is a Phosphoserine. A disordered region spans residues 361-417; it reads EGSMSAFTGRGSPGRGQKTKVSTTPSSGHAASGKHSSSRLAVTDPTRPGATTKTTTS. The tract at residues 362 to 535 is negatively regulates HAT activity; that stretch reads GSMSAFTGRG…ECESGVEDCG (174 aa). The span at 386-395 shows a compositional bias: low complexity; that stretch reads SSGHAASGKH. A Glycyl lysine isopeptide (Lys-Gly) (interchain with G-Cter in SUMO2) cross-link involves residue lysine 491. Residues 533–807 form the MYST-type HAT domain; it reads DCGRYPSVIE…LDPESLRWTP (275 aa). A catalytic region spans residues 536–826; sequence RYPSVIEFGK…EEEREAEKEA (291 aa). The C2HC MYST-type zinc finger occupies 566–591; sequence LYLCEFCLKYMKSKNILLRHSKKCGW. An interaction with BRPF1 region spans residues 570 to 826; the sequence is EFCLKYMKSK…EEEREAEKEA (257 aa). Lysine 633 carries the post-translational modification N6-acetyllysine; by autocatalysis. Residues 674 to 678 and 683 to 689 each bind acetyl-CoA; these read SCIMI and QRQGFGR. Glutamate 709 acts as the Proton donor/acceptor in catalysis. Position 713 (serine 713) interacts with acetyl-CoA. Positions 846–860 are enriched in low complexity; sequence SRVSSRQSSAKVQSK. 4 disordered regions span residues 846-1018, 1031-1252, 1283-1358, and 1388-1418; these read SRVS…NHFF, DAEH…FKDA, MSCN…DDTF, and DECQ…SPSV. Residues lysine 856, lysine 860, and lysine 862 each carry the N6-acetyllysine modification. Serine 866 is modified (phosphoserine). Over residues 887-909 the composition is skewed to acidic residues; sequence SEEEEEEEEEDDEEEEEEEEEES. Over residues 910–924 the composition is skewed to polar residues; it reads IQTSPPRLTKPQSVS. Basic residues predominate over residues 925-944; sequence IKRKRPFVVKKKRGRKRRRI. Over residues 946-959 the composition is skewed to low complexity; that stretch reads SSVTTETISETTEV. Over residues 991–1004 the composition is skewed to basic residues; that stretch reads PVLRKAFPHQPGKK. Basic and acidic residues-rich tracts occupy residues 1031 to 1047 and 1094 to 1114; these read DAEH…EPLK and EEQK…REVT. A compositionally biased stretch (acidic residues) spans 1155–1176; it reads EEGEEEGEEEGEREEQEEEEEV. Positions 1177–1207 are enriched in basic and acidic residues; the sequence is TTEKDLDGAKSKENPEPEISMEKEDPVHLGD. Acidic residues predominate over residues 1208–1217; it reads HEEDEDEEEE. Composition is skewed to basic and acidic residues over residues 1238–1252 and 1310–1320; these read NMER…FKDA and QTQKQDQKNSD. The segment covering 1339–1349 has biased composition (polar residues); sequence ETAQAVQSLTQ. Positions 1359–1872 are interaction with RUNX1 and RUNX2; it reads PDCAETQEAC…QSLNGSYMRR (514 aa). Over residues 1393-1410 the composition is skewed to low complexity; the sequence is SDHSSPVSSVHSHPGQSV.

The protein belongs to the MYST (SAS/MOZ) family. As to quaternary structure, component of the MOZ/MORF complex composed at least of ING5, KAT6A, KAT6B, MEAF6 and one of BRPF1, BRD1/BRPF2 and BRPF3. Interacts with RUNX1 and RUNX2. Autoacetylation at Lys-633 is required for proper function. Ubiquitously expressed.

It localises to the nucleus. The catalysed reaction is L-lysyl-[protein] + acetyl-CoA = N(6)-acetyl-L-lysyl-[protein] + CoA + H(+). Functionally, histone acetyltransferase which may be involved in both positive and negative regulation of transcription. Required for RUNX2-dependent transcriptional activation. Component of the MOZ/MORF complex which has a histone H3 acetyltransferase activity. Involved in cerebral cortex development. The sequence is that of Histone acetyltransferase KAT6B (Kat6b) from Mus musculus (Mouse).